A 541-amino-acid chain; its full sequence is 1'-carboxy-chondrochloren decarboxylase (541 aa).

The 188-residue stretch at 39–226 (TTHRIPAIIS…TRMTIWLAPR (188 aa)) folds into the FAD-binding PCMH-type domain.

It catalyses the reaction 1'-carboxy-chondrochloren A + FAD + 2 H(+) = chondrochloren A + FADH2 + CO2. The catalysed reaction is 1'-carboxy-chondrochloren B + FAD + 2 H(+) = chondrochloren B + FADH2 + CO2. It participates in antibiotic biosynthesis. Its activity is regulated as follows. Activity is not affected by the addition of EDTA or/and EGTA chelators or in the presence of external metals like Zn(2+), Mg(2+), Mn(2+) and Fe(2+). Activity is inhibited under low oxygen conditions. Its function is as follows. Oxidative decarboxylase involved in the biosynthesis of the antibiotics chondrochloren A and chondrochloren B. Catalyzes the decarboxylation of biologically inactive pre-chondrochloren A and pre-chondrochloren B to yield mature chondrochloren A and chondrochloren B, respectively. Cannot decarboxylate free L-tyrosine, 3-chloro-tyrosine or a number of chlorinated and non-chlorinated analog substrates containing variable N-acyl chains. This Chondromyces crocatus protein is 1'-carboxy-chondrochloren decarboxylase.